The sequence spans 197 residues: MNLIPTVIEQTNRGERAYDIYSRLLKDRIIMLGSAIDDNVANSIVSQLLFLAAEDPEKEISLYINSPGGSITAGMAIYDTMQFIKPKVSTICIGMAASMGAFLLAAGEKGKRYALPNSEVMIHQPLGGAQGQATEIEIAAKRILLLRDKLNKVLAERTGQPLEVIERDTDRDNFKSAEEALEYGLIDKILTHTEDKK.

S98 (nucleophile) is an active-site residue. Residue H123 is part of the active site.

The protein belongs to the peptidase S14 family. As to quaternary structure, fourteen ClpP subunits assemble into 2 heptameric rings which stack back to back to give a disk-like structure with a central cavity, resembling the structure of eukaryotic proteasomes. Forms large heterooligomeric complexes consisting of an ATPase component (ClpX, ClpC or ClpE) and a proteolytic component (ClpP).

Its subcellular location is the cytoplasm. The enzyme catalyses Hydrolysis of proteins to small peptides in the presence of ATP and magnesium. alpha-casein is the usual test substrate. In the absence of ATP, only oligopeptides shorter than five residues are hydrolyzed (such as succinyl-Leu-Tyr-|-NHMec, and Leu-Tyr-Leu-|-Tyr-Trp, in which cleavage of the -Tyr-|-Leu- and -Tyr-|-Trp bonds also occurs).. Low intrinsic peptidase activity is stimulated by ATP-binding subunits ClpC, ClpE and ClpX. Activity is disregulated by acyldepsipeptides (ADEP) antibiotics, which negate the need for ATP-binding subunits for activation and which makes it into an unregulated protease. Each ClpP subunit binds 1 ADEP molecule, which prevents binding of ClpX. ADEP binding causes conformational shifts that open the gated pore of the ring. Protease activity is inhibited by diisopropylfluoro-phosphate. Protease activity is inhibited by bortezomib, an oncology drug originally designed to work on the human proteasome. Its function is as follows. Cleaves peptides in various proteins in a process that requires ATP hydrolysis. Has a limited peptidase activity in the absence of ATP-binding subunits ClpC, ClpE or ClpX. Has a chymotrypsin-like activity. Plays a major role in the degradation of misfolded proteins. ClpXP is involved in the complete degradation of the site-2 clipped anti-sigma-W factor RsiW. This results in the release of SigW and the transcriptional activation of genes under the control of the sigma-W factor. Probably the major protease that degrades proteins tagged by trans-translation. The protein is ATP-dependent Clp protease proteolytic subunit of Bacillus subtilis (strain 168).